We begin with the raw amino-acid sequence, 467 residues long: Cytochrome c-552 (467 aa).

A signal peptide spans 1–27 (MVKKLTGKSFALSALVAASFVAAGAMA). H87 serves as a coordination point for heme c. The heme site is built by C115, C118, and K119. C153, C156, H157, C195, C198, and H199 together coordinate heme c. Ca(2+) contacts are provided by E201, Y202, K250, and Q252. A substrate-binding site is contributed by Y202. Residue H253 participates in substrate binding. Heme c is bound by residues H264, C271, C274, H275, H290, C303, C306, H307, and H382.

The protein belongs to the cytochrome c-552 family. Ca(2+) is required as a cofactor. Heme c serves as cofactor.

The protein resides in the periplasm. It carries out the reaction 6 Fe(III)-[cytochrome c] + NH4(+) + 2 H2O = 6 Fe(II)-[cytochrome c] + nitrite + 8 H(+). Its pathway is nitrogen metabolism; nitrate reduction (assimilation). Its function is as follows. Catalyzes the reduction of nitrite to ammonia, consuming six electrons in the process. This chain is Cytochrome c-552, found in Shewanella amazonensis (strain ATCC BAA-1098 / SB2B).